The primary structure comprises 242 residues: Small ribosomal subunit protein uS2 (242 aa).

The protein belongs to the universal ribosomal protein uS2 family.

The chain is Small ribosomal subunit protein uS2 from Shewanella baltica (strain OS223).